The following is a 301-amino-acid chain: Probable alpha-L-glutamate ligase (301 aa).

The 184-residue stretch at 104-287 (LQLLARKGIG…VATKVIEFIE (184 aa)) folds into the ATP-grasp domain. Residues Lys-141, 178–179 (EF), Asp-187, and 211–213 (RSN) contribute to the ATP site. The Mg(2+) site is built by Asp-248, Glu-260, and Asn-262. Asp-248, Glu-260, and Asn-262 together coordinate Mn(2+).

This sequence belongs to the RimK family. Requires Mg(2+) as cofactor. Mn(2+) is required as a cofactor.

This Nitrosococcus oceani (strain ATCC 19707 / BCRC 17464 / JCM 30415 / NCIMB 11848 / C-107) protein is Probable alpha-L-glutamate ligase.